Here is a 537-residue protein sequence, read N- to C-terminus: Zinc finger protein 835 (537 aa).

Residues 12-109 (AELEGNWKHE…RERGGGPKKP (98 aa)) are disordered. Residues 63–77 (TISSPAATQASVPDD) show a composition bias toward polar residues. A compositionally biased stretch (basic and acidic residues) spans 89-104 (SPKERHPDSRQRERGG). 14 consecutive C2H2-type zinc fingers follow at residues 110-132 (WKCGDCGKAFSYCSAFILHQRIH), 138-160 (FACPECGKAFSQSVHLTLHQRTH), 166-188 (YACHECGKAFSQGSYLASHWRTH), 194-216 (HRCADCGKAFTRVTHLTQHRRVH), 222-244 (YACAQCAKAFRNRSSLIEHQRIH), 250-272 (YECSACAKAFRFSSALIRHQRIH), 278-300 (YRCGQCAKAFAQIAHLTQHRRVH), 306-328 (YTCQDCGALFSQSASLAEHRRIH), 334-356 (YACGQCAKAFTQVSHLTQHQRTH), 362-384 (YPCHDCGKRFSNRSHLLQHRLVH), 390-412 (YRCLQCGAAFSHVSSLIEHQKIH), 418-440 (YKCGECGKAFSQGSSLALHQRTH), 446-468 (YTCPECGKAFSNRSYLIQHHIVH), and 474-496 (YECSGCGKAFSFSSALIRHQRTH). The tract at residues 497–537 (ADSSGRLCPAPTPDSTPGLSQGGETCQQGCPGRNPRGPAED) is disordered. Residues 509-524 (PDSTPGLSQGGETCQQ) show a composition bias toward polar residues.

Belongs to the krueppel C2H2-type zinc-finger protein family.

Its subcellular location is the nucleus. Its function is as follows. May be involved in transcriptional regulation. The protein is Zinc finger protein 835 (ZNF835) of Homo sapiens (Human).